We begin with the raw amino-acid sequence, 182 residues long: Adenine phosphoribosyltransferase (182 aa).

The protein belongs to the purine/pyrimidine phosphoribosyltransferase family. Homodimer.

The protein localises to the cytoplasm. It carries out the reaction AMP + diphosphate = 5-phospho-alpha-D-ribose 1-diphosphate + adenine. Its pathway is purine metabolism; AMP biosynthesis via salvage pathway; AMP from adenine: step 1/1. In terms of biological role, catalyzes a salvage reaction resulting in the formation of AMP, that is energically less costly than de novo synthesis. This is Adenine phosphoribosyltransferase from Streptomyces avermitilis (strain ATCC 31267 / DSM 46492 / JCM 5070 / NBRC 14893 / NCIMB 12804 / NRRL 8165 / MA-4680).